The chain runs to 76 residues: MLCLPVFIILLLLASPAAPNPLERRIQSDLIRTALEDADMKTPKGVLSGIMSNLGTVGNMVGGFCCTVYSGCCSEK.

The N-terminal stretch at 1–19 is a signal peptide; the sequence is MLCLPVFIILLLLASPAAP. Positions 20-44 are excised as a propeptide; sequence NPLERRIQSDLIRTALEDADMKTPK.

Belongs to the conotoxin T superfamily. Contains 2 disulfide bonds that can be either 'C1-C3, C2-C4' or 'C1-C4, C2-C3', since these disulfide connectivities have been observed for conotoxins with cysteine framework V (for examples, see AC P0DQQ7 and AC P81755). Expressed by the venom duct.

The protein localises to the secreted. The protein is Conotoxin TsMLCL-03 of Conus tessulatus (Tessellate cone).